Reading from the N-terminus, the 302-residue chain is uncharacterized protein (302 aa).

E48 is a catalytic residue.

It belongs to the PhzF family.

This is an uncharacterized protein from Clostridium acetobutylicum (strain ATCC 824 / DSM 792 / JCM 1419 / IAM 19013 / LMG 5710 / NBRC 13948 / NRRL B-527 / VKM B-1787 / 2291 / W).